Consider the following 361-residue polypeptide: MSTLPEAKLDVLLAHHAALEAQLMAQVGAEDYVRITRELSELNPLVEAVKSYRQVRDELGEIDELLEDPATEPEMRAMAEAERDALDAHRDELIQQIRIALLPKDAMDERNVMLEIRAGTGGDEASLFAGDLFRMYEKFAALQGWSVEVISASEGTVGGYKEIIAEVKGRGAFAKLKFESGVHRVQRVPDTETQGRIHTSAATVAVLPEVEDVDVDIKQDDLRIETMRAQGAGGQHVNKTESAIRITHLPTGIVVMMQDSRSQHKNRASAMNILRSRIYDAEQQRLDAARSAERKAKVGSGDRSERIRTYNFPQGRVTDHRINLTLYKLPQVIAGEALGELIDALTTEHQAAQLAEQGNAA.

Glutamine 235 carries the N5-methylglutamine modification.

Belongs to the prokaryotic/mitochondrial release factor family. Post-translationally, methylated by PrmC. Methylation increases the termination efficiency of RF1.

Its subcellular location is the cytoplasm. In terms of biological role, peptide chain release factor 1 directs the termination of translation in response to the peptide chain termination codons UAG and UAA. The polypeptide is Peptide chain release factor 1 (Rhodopseudomonas palustris (strain ATCC BAA-98 / CGA009)).